Consider the following 376-residue polypeptide: E3 ubiquitin-protein ligase RNF133 (376 aa).

The PA domain maps to 65–167 (SSTLKRVAGV…LKGTEIFHLI (103 aa)). A helical membrane pass occupies residues 190–210 (YLVSFVIVTTATLAYFIFYHI). Residues 256 to 297 (CVICFERYKPNDIVRILTCKHFFHKNCIDPWILPHGTCPICK) form an RING-type; atypical zinc finger. Residues 327 to 376 (ETLSPSEEETNNEVSPAGTSDKVIHVEENPTSQNNDIQPHSVVEDVHPSP) form a disordered region. Residues 355–364 (NPTSQNNDIQ) are compositionally biased toward polar residues.

Interacts with E3 ligase UBE2J1. In terms of processing, auto-ubiquitinated. In terms of tissue distribution, expression is testis-specific.

The protein resides in the endoplasmic reticulum membrane. The enzyme catalyses S-ubiquitinyl-[E2 ubiquitin-conjugating enzyme]-L-cysteine + [acceptor protein]-L-lysine = [E2 ubiquitin-conjugating enzyme]-L-cysteine + N(6)-ubiquitinyl-[acceptor protein]-L-lysine.. It functions in the pathway protein modification; protein ubiquitination. Its function is as follows. Has E3 ubiquitin-protein ligase activity. Plays a role in male fecundity through the interaction with the E2 ubituitin-protein ligase UBE2J1. The chain is E3 ubiquitin-protein ligase RNF133 from Homo sapiens (Human).